The primary structure comprises 372 residues: MSNKDIRVVVGMSGGVDSSVTAYLLKEQGYDVIGIFMKNWDDTDENGVCTATEDYNDVIAVCNQIGIPYYAVNFEEQYWDKVFTYFLDEYKKGRTPNPDVMCNKEIKFKAFLEHALKLGADYVATGHYARIRRHDDGHVEMLRGVDNNKDQTYFLNQLSQEQLSKVMFPIGDIEKSEVRRIAEEQNLATAKKKDSTGICFIGERNFKEFLSHYLPAQSGEMLTLNGKKMGQHSGLMYYTIGQRHGLGIGGDGDPWFVVGKNLNDNVLYVEQGFHHDALYSDYLIASDYSFVNPSEIDLEKGFECTAKFRYRQKDTKVYVQRENENSIRVTFAEPVRAITPGQAVVFYNQEVCLGGATIDDVYKNEGQLSYVV.

Residues 11–18 and M37 each bind ATP; that span reads GMSGGVDS. Residues 97-99 form an interaction with target base in tRNA region; it reads NPD. Catalysis depends on C102, which acts as the Nucleophile. Residues C102 and C199 are joined by a disulfide bond. G126 is a binding site for ATP. Positions 149 to 151 are interaction with tRNA; it reads KDQ. C199 serves as the catalytic Cysteine persulfide intermediate. Residues 309 to 310 form an interaction with tRNA region; the sequence is RY.

The protein belongs to the MnmA/TRMU family.

The protein resides in the cytoplasm. It carries out the reaction S-sulfanyl-L-cysteinyl-[protein] + uridine(34) in tRNA + AH2 + ATP = 2-thiouridine(34) in tRNA + L-cysteinyl-[protein] + A + AMP + diphosphate + H(+). In terms of biological role, catalyzes the 2-thiolation of uridine at the wobble position (U34) of tRNA, leading to the formation of s(2)U34. This is tRNA-specific 2-thiouridylase MnmA from Staphylococcus epidermidis (strain ATCC 35984 / DSM 28319 / BCRC 17069 / CCUG 31568 / BM 3577 / RP62A).